The sequence spans 84 residues: Capsid protein G8P (84 aa).

The N-terminal stretch at 1–29 (MSVITKVAAAKNKIVVGAGLLMASAGAFA) is a signal peptide. Over 30–58 (ADDGTSTATSYATEAMNSLKTQATDLIDQ) the chain is Periplasmic. Residues 59 to 76 (TWPVVTSVAVAGLAIRLF) form a helical membrane-spanning segment. The Cytoplasmic portion of the chain corresponds to 77–84 (KKFSSKAV).

This sequence belongs to the inovirus capsid protein family. In terms of assembly, homomultimerizes. There are several thousands of this protein in the phage capsid.

Its subcellular location is the virion. It is found in the host membrane. In terms of biological role, self assembles to form a helical capsid wrapping up the viral genomic DNA. The capsid displays a filamentous structure with a length of 760-1950 nm and a width of 6-8 nm. The virion assembly and budding take place at the host inner membrane. This chain is Capsid protein G8P (VIII), found in Escherichia coli (Bacteriophage I2-2).